The chain runs to 818 residues: Patatin-like phospholipase domain-containing protein YALI0D16379g (818 aa).

Disordered stretches follow at residues 1–50 and 154–178; these read MLKL…RDVN and EEKR…KTKE. Over residues 22-38 the composition is skewed to polar residues; that stretch reads SQQLTLDSPEGSETSSR. Over residues 164-178 the composition is skewed to basic and acidic residues; the sequence is KDKEGSEGDKTKTKE. The helical transmembrane segment at 223–243 threads the bilayer; that stretch reads WPALFFIGMWLLFLTTIYASV. A PNPLA domain is found at 398 to 589; it reads LCLSGGGCFA…RTDIPVDALN (192 aa). The GXSXG signature appears at 429–433; it reads GTSGG. Serine 431 functions as the Nucleophile in the catalytic mechanism. The Proton acceptor role is filled by aspartate 576. A disordered region spans residues 781–805; sequence AGTDISSSNSDYDHEPQWEMDEGDS.

It belongs to the PLPL family.

The protein resides in the membrane. Functionally, probable lipid hydrolase. In Yarrowia lipolytica (strain CLIB 122 / E 150) (Yeast), this protein is Patatin-like phospholipase domain-containing protein YALI0D16379g.